The following is a 1365-amino-acid chain: Patatin-like phospholipase domain-containing protein 6 (1365 aa).

Residues 1-50 lie on the Lumenal side of the membrane; the sequence is MGTSSHGLATNSSGAKVAERDGFQDVPAPGEGAAGRICGAQPVPFVPQVL. Asparagine 11 carries N-linked (GlcNAc...) asparagine glycosylation. A helical membrane pass occupies residues 51 to 71; it reads GVMIGAGVAVVVTAVLILLVV. Topologically, residues 72 to 1365 are cytoplasmic; sequence RRLRVPKTPA…QEPPGSATDA (1294 aa). Residue 186 to 313 coordinates a nucleoside 3',5'-cyclic phosphate; that stretch reads VLGHFEKPLF…VRVVQIIMVR (128 aa). Disordered regions lie at residues 343 to 427 and 441 to 463; these read FPSP…RSDF and QEGA…PREQ. Residue serine 345 is modified to Phosphoserine. Residues 350–367 show a composition bias toward polar residues; the sequence is TRTSPVRGSKRMVSTSAT. Threonine 352 is modified (phosphothreonine). Phosphoserine is present on residues serine 353 and serine 363. Residues 375–389 show a composition bias toward pro residues; it reads GRPPDPTGAPLPGPT. Position 411 is a phosphoserine (serine 411). A Phosphothreonine modification is found at threonine 455. A nucleoside 3',5'-cyclic phosphate-binding positions include 502–624 and 620–740; these read ELAK…VAAR and TVAA…LSQK. The PNPLA domain occupies 971–1137; the sequence is LVLGGGGARG…INNLPADIAR (167 aa). Residues 975 to 980 carry the GXGXXG motif; the sequence is GGGARG. A GXSXG motif is present at residues 1002–1006; it reads GTSIG. Residue serine 1004 is the Nucleophile of the active site. The active-site Proton acceptor is aspartate 1124. The short motif at 1124 to 1126 is the DGA/G element; the sequence is DGG. Positions 1296–1365 are disordered; the sequence is SYVSDGCADG…QEPPGSATDA (70 aa). The span at 1303-1319 shows a compositional bias: acidic residues; that stretch reads ADGEESDCLTEYEEDAG.

The protein belongs to the NTE family. In terms of processing, glycosylated.

It localises to the endoplasmic reticulum membrane. It carries out the reaction a 1-acyl-sn-glycero-3-phosphocholine + H2O = sn-glycerol 3-phosphocholine + a fatty acid + H(+). The catalysed reaction is 1-hexadecanoyl-sn-glycero-3-phosphocholine + H2O = sn-glycerol 3-phosphocholine + hexadecanoate + H(+). It catalyses the reaction 1-(9Z-octadecenoyl)-sn-glycero-3-phosphocholine + H2O = sn-glycerol 3-phosphocholine + (9Z)-octadecenoate + H(+). The enzyme catalyses 1-hexadecanoylglycerol + H2O = glycerol + hexadecanoate + H(+). It carries out the reaction 2-hexadecanoylglycerol + H2O = glycerol + hexadecanoate + H(+). The catalysed reaction is 1-(9Z-octadecenoyl)-glycerol + H2O = glycerol + (9Z)-octadecenoate + H(+). It catalyses the reaction 2-(9Z-octadecenoyl)-glycerol + H2O = glycerol + (9Z)-octadecenoate + H(+). The enzyme catalyses 2-(5Z,8Z,11Z,14Z-eicosatetraenoyl)-glycerol + H2O = glycerol + (5Z,8Z,11Z,14Z)-eicosatetraenoate + H(+). It carries out the reaction 1-hexadecanoyl-sn-glycero-3-phosphate + H2O = sn-glycerol 3-phosphate + hexadecanoate + H(+). Its activity is regulated as follows. Inhibited by a series a OPs such as mipafox (MPX), phenyl saligenin phosphate (PSP), phenyl dipentyl phosphinate (PDPP), diisopropyl fluorophosphate and paraoxon. In terms of biological role, phospholipase B that deacylates intracellular phosphatidylcholine (PtdCho), generating glycerophosphocholine (GroPtdCho). This deacylation occurs at both sn-2 and sn-1 positions of PtdCho. Catalyzes the hydrolysis of several naturally occurring membrane-associated lipids. Hydrolyzes lysophospholipids and monoacylglycerols, preferring the 1-acyl to the 2-acyl isomer. Does not catalyze hydrolysis of di- or triacylglycerols or fatty acid amides. This is Patatin-like phospholipase domain-containing protein 6 (PNPLA6) from Pongo abelii (Sumatran orangutan).